The primary structure comprises 1269 residues: Protein strawberry notch homolog 1 (1269 aa).

Residues 21–47 (NDLFDVDGGDAGLATPTPPSVQQQQPP) are disordered. N6-acetyllysine is present on K113. Residues S126 and S178 each carry the phosphoserine modification. K377 is modified (N6-acetyllysine). The interval 652-725 (PSNNSSPRDS…SLITSQDAVE (74 aa)) is disordered. Phosphoserine occurs at positions 656, 657, and 661. Positions 679–693 (SGSESDVSDNEESDY) are enriched in acidic residues. 2 positions are modified to phosphoserine: S700 and S701. Positions 719-746 (TSQDAVERAQQMKKDLLDKLEKLAEDLP) form a coiled coil. K1098 carries the N6-acetyllysine modification. The residue at position 1262 (S1262) is a Phosphoserine.

Belongs to the SBNO family.

The protein resides in the nucleus. Functionally, plays a crucial role in the regulation of neural stem cells (NSCs) proliferation. Enhances the phosphorylation of GSK3B through the PI3K-Akt signaling pathway, thereby upregulating the Wnt/beta-catenin signaling pathway and promoting the proliferation of NSCs. Improves ischemic stroke recovery while inhibiting neuroinflammation through small extracellular vesicles (sEVs)-mediated mechanism. Enhances the secretion of sEVs from NSCs, which in turn inhibit both the MAPK and NF-kappaB pathways in microglia. This inhibition suppresses the pro-inflammatory M1 polarization of microglia, promoting a shift towards the M2 anti-inflammatory phenotype, which is beneficial for reducing neuroinflammation. The polypeptide is Protein strawberry notch homolog 1 (Sbno1) (Rattus norvegicus (Rat)).